We begin with the raw amino-acid sequence, 109 residues long: Large ribosomal subunit protein uL22 (109 aa).

The protein belongs to the universal ribosomal protein uL22 family. In terms of assembly, part of the 50S ribosomal subunit.

This protein binds specifically to 23S rRNA; its binding is stimulated by other ribosomal proteins, e.g. L4, L17, and L20. It is important during the early stages of 50S assembly. It makes multiple contacts with different domains of the 23S rRNA in the assembled 50S subunit and ribosome. Functionally, the globular domain of the protein is located near the polypeptide exit tunnel on the outside of the subunit, while an extended beta-hairpin is found that lines the wall of the exit tunnel in the center of the 70S ribosome. This chain is Large ribosomal subunit protein uL22, found in Bordetella petrii (strain ATCC BAA-461 / DSM 12804 / CCUG 43448).